A 134-amino-acid polypeptide reads, in one-letter code: Transcription factor atoh7 (134 aa).

Residues 1–27 (MKPRRPSCADSGSDSDSRDPEKFESAM) are disordered. The span at 15 to 27 (SDSRDPEKFESAM) shows a compositional bias: basic and acidic residues. In terms of domain architecture, bHLH spans 28–80 (RRRMAANARERKRMQGLNTAFDRLRKVVPQWGQDKKLSKYETLQMALSYIMAL).

Its subcellular location is the nucleus. It is found in the perikaryon. The protein resides in the cell projection. The protein localises to the axon. Its function is as follows. Transcription factor that binds to DNA at the consensus sequence 5'-CAG[GC]TG-3'. Involved in the differentiation of retinal ganglion cells, photoreceptor population and optic nerve development. Required for retinal circadian rhythm photoentrainment. In Danio rerio (Zebrafish), this protein is Transcription factor atoh7.